A 438-amino-acid polypeptide reads, in one-letter code: V-type ATP synthase beta chain (438 aa).

It belongs to the ATPase alpha/beta chains family.

Produces ATP from ADP in the presence of a proton gradient across the membrane. The V-type beta chain is a regulatory subunit. The chain is V-type ATP synthase beta chain from Chlamydia trachomatis serovar L2b (strain UCH-1/proctitis).